Reading from the N-terminus, the 194-residue chain is Thioredoxin peroxidase (194 aa).

The Thioredoxin domain maps to 2-160; sequence LQPNMPAPNF…ALRLLDAFIF (159 aa). Residue Cys47 is the Cysteine sulfenic acid (-SOH) intermediate of the active site.

This sequence belongs to the peroxiredoxin family. AhpC/Prx1 subfamily. Homodimer; disulfide-linked, upon oxidation.

It catalyses the reaction a hydroperoxide + [thioredoxin]-dithiol = an alcohol + [thioredoxin]-disulfide + H2O. Functionally, antioxidant. Could be involved in protection against reactive oxygen species (ROS) generated by metabolic processes and/or protection of the parasite against ROS released by immune effector cells. In terms of biological role, thiol-specific peroxidase that catalyzes the reduction of hydrogen peroxide and organic hydroperoxides to water and alcohols, respectively. Plays a role in cell protection against oxidative stress by detoxifying peroxides and as sensor of hydrogen peroxide-mediated signaling events. The polypeptide is Thioredoxin peroxidase (Fasciola hepatica (Liver fluke)).